A 488-amino-acid chain; its full sequence is Glutamyl-tRNA(Gln) amidotransferase subunit A (488 aa).

Active-site charge relay system residues include Lys77 and Ser152. The Acyl-ester intermediate role is filled by Ser176.

Belongs to the amidase family. GatA subfamily. As to quaternary structure, heterotrimer of A, B and C subunits.

The enzyme catalyses L-glutamyl-tRNA(Gln) + L-glutamine + ATP + H2O = L-glutaminyl-tRNA(Gln) + L-glutamate + ADP + phosphate + H(+). Its function is as follows. Allows the formation of correctly charged Gln-tRNA(Gln) through the transamidation of misacylated Glu-tRNA(Gln) in organisms which lack glutaminyl-tRNA synthetase. The reaction takes place in the presence of glutamine and ATP through an activated gamma-phospho-Glu-tRNA(Gln). In Streptococcus gordonii (strain Challis / ATCC 35105 / BCRC 15272 / CH1 / DL1 / V288), this protein is Glutamyl-tRNA(Gln) amidotransferase subunit A.